Consider the following 267-residue polypeptide: Tryptophan synthase alpha chain (267 aa).

Active-site proton acceptor residues include E47 and D58.

It belongs to the TrpA family. In terms of assembly, tetramer of two alpha and two beta chains.

It carries out the reaction (1S,2R)-1-C-(indol-3-yl)glycerol 3-phosphate + L-serine = D-glyceraldehyde 3-phosphate + L-tryptophan + H2O. It participates in amino-acid biosynthesis; L-tryptophan biosynthesis; L-tryptophan from chorismate: step 5/5. Its function is as follows. The alpha subunit is responsible for the aldol cleavage of indoleglycerol phosphate to indole and glyceraldehyde 3-phosphate. This chain is Tryptophan synthase alpha chain, found in Pelodictyon phaeoclathratiforme (strain DSM 5477 / BU-1).